Consider the following 155-residue polypeptide: Riboflavin kinase (155 aa).

Glycine 15, lysine 21, threonine 27, and asparagine 29 together coordinate ATP. Positions 27 and 29 each coordinate Mg(2+). The active-site Nucleophile is the glutamate 79. Positions 82, 84, and 91 each coordinate ATP. FMN-binding residues include arginine 104, lysine 107, and phenylalanine 109.

As to quaternary structure, monomer. Directly interacts with TNFRSF1A death domain; this interaction may be supported by TRADD. In the absence of TNFRSF1A, interacts with TRADD. Independently of TNFRSF1A, interacts with the NADPH oxidase subunit CYBA. Zn(2+) serves as cofactor. Mg(2+) is required as a cofactor.

Its subcellular location is the cytoplasm. The catalysed reaction is riboflavin + ATP = FMN + ADP + H(+). It participates in cofactor biosynthesis; FMN biosynthesis; FMN from riboflavin (ATP route): step 1/1. In terms of biological role, catalyzes the phosphorylation of riboflavin (vitamin B2) to form flavin-mononucleotide (FMN), hence rate-limiting enzyme in the synthesis of FAD. Essential for TNF-induced reactive oxygen species (ROS) production. Through its interaction with both TNFRSF1A and CYBA, physically and functionally couples TNFRSF1A to NADPH oxidase. TNF-activation of RFK may enhance the incorporation of FAD in NADPH oxidase, a critical step for the assembly and activation of NADPH oxidase. The chain is Riboflavin kinase (Rfk) from Mus musculus (Mouse).